A 124-amino-acid chain; its full sequence is Conotoxin Cl14.12 (124 aa).

The signal sequence occupies residues Met1–Ala17. A propeptide spanning residues Leu18 to Thr74 is cleaved from the precursor.

Contains 2 disulfide bond. As to expression, expressed by the venom duct.

It is found in the secreted. The polypeptide is Conotoxin Cl14.12 (Californiconus californicus (California cone)).